Reading from the N-terminus, the 232-residue chain is MNKEDLKRQAAARALDEVRDGMKIGLGTGSTAKHFVELLGEKVRAGLDVIGVPTSEVTRADAERCGIRLTTLDEIDRLDLTVDGADEIDPRLELIKGGGGALLREKIVAAASDRMIVIADETKWVDCLGHFPLPVEVIPFGLAATRRAIEQACAEVGASGRLQLREGKDGHAFVTDGGHWIIDAHLGRIPDAPRLAQLLSAIPGVVEHGLFIGIASTVVLAGTDGIRTVERA.

Substrate contacts are provided by residues 28-31 (TGST), 83-86 (DGAD), and 96-99 (KGGG). Catalysis depends on Glu-105, which acts as the Proton acceptor. Position 123 (Lys-123) interacts with substrate.

It belongs to the ribose 5-phosphate isomerase family. Homodimer.

The enzyme catalyses aldehydo-D-ribose 5-phosphate = D-ribulose 5-phosphate. The protein operates within carbohydrate degradation; pentose phosphate pathway; D-ribose 5-phosphate from D-ribulose 5-phosphate (non-oxidative stage): step 1/1. Catalyzes the reversible conversion of ribose-5-phosphate to ribulose 5-phosphate. The polypeptide is Ribose-5-phosphate isomerase A (Rhodopseudomonas palustris (strain HaA2)).